A 65-amino-acid chain; its full sequence is Large ribosomal subunit protein bL33c (65 aa).

Belongs to the bacterial ribosomal protein bL33 family.

Its subcellular location is the plastid. The protein localises to the chloroplast. This is Large ribosomal subunit protein bL33c from Zygnema circumcarinatum (Green alga).